Reading from the N-terminus, the 500-residue chain is L-arabinose isomerase (500 aa).

Positions 306, 333, 350, and 450 each coordinate Mn(2+).

It belongs to the arabinose isomerase family. Homohexamer. Mn(2+) serves as cofactor.

The enzyme catalyses beta-L-arabinopyranose = L-ribulose. The protein operates within carbohydrate degradation; L-arabinose degradation via L-ribulose; D-xylulose 5-phosphate from L-arabinose (bacterial route): step 1/3. Its function is as follows. Catalyzes the conversion of L-arabinose to L-ribulose. The protein is L-arabinose isomerase of Yersinia pseudotuberculosis serotype I (strain IP32953).